A 381-amino-acid polypeptide reads, in one-letter code: Testis-specific expressed protein 55 (381 aa).

2 disordered regions span residues 1 to 176 (MDEP…SDPH) and 292 to 317 (TTEY…QSSR). Composition is skewed to basic and acidic residues over residues 8 to 24 (SLNH…EKNN) and 65 to 103 (RTSE…ERRT). Over residues 104-113 (SQPPNQQLPS) the composition is skewed to polar residues. A compositionally biased stretch (basic and acidic residues) spans 114–125 (HSERKTSGKIDG). Acidic residues predominate over residues 134–143 (TDQETSEFDD). Composition is skewed to polar residues over residues 147–163 (SAST…QEYN) and 292–302 (TTEYTSDTTPV). The span at 307–317 (RSSQRSSQSSR) shows a compositional bias: low complexity.

Testis-specific.

Its subcellular location is the nucleus. This chain is Testis-specific expressed protein 55, found in Mus musculus (Mouse).